We begin with the raw amino-acid sequence, 275 residues long: uncharacterized protein (275 aa).

4 residues coordinate Mg(2+): Glu-71, Asp-85, Ile-87, and Asp-88. Residue Glu-71 participates in substrate binding. Residue 87 to 90 coordinates substrate; that stretch reads IDGT. 3 consecutive transmembrane segments (helical) span residues 87 to 107, 112 to 132, and 178 to 198; these read IDGTANFLSGIPLWAVSIAFV, PVLGAVALPALDTLLWASVDG, and IVCLGSCAAALAMVAAGRLAG. Asp-208 serves as a coordination point for Mg(2+). Asp-208 provides a ligand contact to substrate.

The protein belongs to the inositol monophosphatase superfamily.

It localises to the cell membrane. This is an uncharacterized protein from Sinorhizobium fredii (strain NBRC 101917 / NGR234).